Reading from the N-terminus, the 212-residue chain is N-(5'-phosphoribosyl)anthranilate isomerase (212 aa).

It belongs to the TrpF family.

It carries out the reaction N-(5-phospho-beta-D-ribosyl)anthranilate = 1-(2-carboxyphenylamino)-1-deoxy-D-ribulose 5-phosphate. The protein operates within amino-acid biosynthesis; L-tryptophan biosynthesis; L-tryptophan from chorismate: step 3/5. The chain is N-(5'-phosphoribosyl)anthranilate isomerase from Microcystis aeruginosa (strain NIES-843 / IAM M-2473).